The chain runs to 435 residues: Palmitoyltransferase pfa4 (435 aa).

Over 1 to 10 the chain is Cytoplasmic; sequence MLCSSFSVSR. A helical membrane pass occupies residues 11 to 31; sequence LAIPAVCILIAFLAYTSQIFF. The Lumenal portion of the chain corresponds to 32–48; that stretch reads LYFEDAPLKEDEVWRIN. Residues 49–69 traverse the membrane as a helical segment; the sequence is ILAICIWICYYRACTVDPGHV. Residues 70–129 lie on the Cytoplasmic side of the membrane; sequence PKGWMPSDRERLKADRASGRQRWCRRCEAYKPPRAHHCKTCERCVPKMDHHCPWTSNCVS. The DHHC domain occupies 91-141; that stretch reads RWCRRCEAYKPPRAHHCKTCERCVPKMDHHCPWTSNCVSHFTFPHFARFLF. Cysteine 121 serves as the catalytic S-palmitoyl cysteine intermediate. A helical transmembrane segment spans residues 130 to 150; the sequence is HFTFPHFARFLFYAVVGIAYL. The Lumenal portion of the chain corresponds to 151–179; sequence ETRLWQRVSKVWGSRHLPSYLGPSMGQIG. A helical membrane pass occupies residues 180-200; sequence HLFVLFVTNSLTLFALSLLLL. Residues 201-435 lie on the Cytoplasmic side of the membrane; the sequence is RTLWSLGSNT…QRAKRQHLSQ (235 aa). Residues 359–368 are compositionally biased toward basic and acidic residues; it reads RKPFHVRLEE. The interval 359 to 408 is disordered; that stretch reads RKPFHVRLEEYSNGSSDAEADTGSDDDSDHGEEGWKNSEGERLRDFGVDE. A compositionally biased stretch (acidic residues) spans 376–388; that stretch reads AEADTGSDDDSDH. The segment covering 389–405 has biased composition (basic and acidic residues); the sequence is GEEGWKNSEGERLRDFG.

Belongs to the DHHC palmitoyltransferase family. PFA4 subfamily.

The protein resides in the endoplasmic reticulum membrane. It carries out the reaction L-cysteinyl-[protein] + hexadecanoyl-CoA = S-hexadecanoyl-L-cysteinyl-[protein] + CoA. In terms of biological role, mediates the reversible addition of palmitate to target proteins, thereby regulating their membrane association and biological function. The chain is Palmitoyltransferase pfa4 from Emericella nidulans (strain FGSC A4 / ATCC 38163 / CBS 112.46 / NRRL 194 / M139) (Aspergillus nidulans).